The chain runs to 584 residues: Insulin-like growth factor 2 mRNA-binding protein 3 (584 aa).

2 RRM domains span residues 2-75 (NKLY…HSVP) and 81-156 (RKLQ…YIPD). The interval 160–199 (AQQPPQQHPQGRRGFGQRGPPRQGSPSATTRQKPQSDVPL) is disordered. Over residues 184 to 194 (SPSATTRQKPQ) the composition is skewed to polar residues. 4 KH domains span residues 196-261 (DVPL…CKII), 277-344 (EIPL…EEEI), 409-474 (SETV…QGRI), and 491-557 (KLEA…QRKI).

It belongs to the RRM IMP/VICKZ family. In terms of assembly, homodimer and multimer.

The protein resides in the cytoplasm. It is found in the nucleus. The protein localises to the P-body. Its subcellular location is the stress granule. Its function is as follows. RNA-binding factor that may recruit target transcripts to cytoplasmic protein-RNA complexes (mRNPs). This transcript 'caging' into mRNPs allows mRNA transport and transient storage. It also modulates the rate and location at which target transcripts encounter the translational apparatus and shields them from endonuclease attacks or microRNA-mediated degradation. Preferentially binds to N6-methyladenosine (m6A)-containing mRNAs and increases their stability. This Gallus gallus (Chicken) protein is Insulin-like growth factor 2 mRNA-binding protein 3 (IGF2BP3).